Reading from the N-terminus, the 489-residue chain is Squalene monooxygenase (489 aa).

Residues 10–30 (VTYDALIVGAGVIGPCVATAL) traverse the membrane as a helical segment. FAD contacts are provided by residues 21-22 (VI), 41-42 (ER), R49, R151, V167, D328, and M341. The next 2 membrane-spanning stretches (helical) occupy residues 426–446 (FLAG…AVAF) and 464–484 (ALLE…PFLV).

It belongs to the squalene monooxygenase family. FAD serves as cofactor.

The protein localises to the microsome membrane. It is found in the endoplasmic reticulum membrane. It carries out the reaction squalene + reduced [NADPH--hemoprotein reductase] + O2 = (S)-2,3-epoxysqualene + oxidized [NADPH--hemoprotein reductase] + H2O + H(+). It functions in the pathway terpene metabolism; lanosterol biosynthesis; lanosterol from farnesyl diphosphate: step 2/3. In terms of biological role, catalyzes the stereospecific oxidation of squalene to (S)-2,3-epoxysqualene, and is considered to be a rate-limiting enzyme in steroid biosynthesis. The chain is Squalene monooxygenase (ERG1) from Candida glabrata (strain ATCC 2001 / BCRC 20586 / JCM 3761 / NBRC 0622 / NRRL Y-65 / CBS 138) (Yeast).